We begin with the raw amino-acid sequence, 376 residues long: Queuine tRNA-ribosyltransferase (376 aa).

The Proton acceptor role is filled by Asp-92. Substrate is bound by residues Asp-92–Phe-96, Asp-146, Gln-190, and Gly-217. Positions Gly-248–Asp-254 are RNA binding. Asp-267 (nucleophile) is an active-site residue. An RNA binding; important for wobble base 34 recognition region spans residues Thr-272–Arg-276. Zn(2+)-binding residues include Cys-305, Cys-307, Cys-310, and His-337.

This sequence belongs to the queuine tRNA-ribosyltransferase family. As to quaternary structure, homodimer. Within each dimer, one monomer is responsible for RNA recognition and catalysis, while the other monomer binds to the replacement base PreQ1. It depends on Zn(2+) as a cofactor.

The catalysed reaction is 7-aminomethyl-7-carbaguanine + guanosine(34) in tRNA = 7-aminomethyl-7-carbaguanosine(34) in tRNA + guanine. Its pathway is tRNA modification; tRNA-queuosine biosynthesis. In terms of biological role, catalyzes the base-exchange of a guanine (G) residue with the queuine precursor 7-aminomethyl-7-deazaguanine (PreQ1) at position 34 (anticodon wobble position) in tRNAs with GU(N) anticodons (tRNA-Asp, -Asn, -His and -Tyr). Catalysis occurs through a double-displacement mechanism. The nucleophile active site attacks the C1' of nucleotide 34 to detach the guanine base from the RNA, forming a covalent enzyme-RNA intermediate. The proton acceptor active site deprotonates the incoming PreQ1, allowing a nucleophilic attack on the C1' of the ribose to form the product. After dissociation, two additional enzymatic reactions on the tRNA convert PreQ1 to queuine (Q), resulting in the hypermodified nucleoside queuosine (7-(((4,5-cis-dihydroxy-2-cyclopenten-1-yl)amino)methyl)-7-deazaguanosine). The protein is Queuine tRNA-ribosyltransferase of Stenotrophomonas maltophilia (strain R551-3).